Consider the following 297-residue polypeptide: Homoserine kinase (297 aa).

ATP is bound at residue 82 to 92 (PLTRGLGSSAS).

It belongs to the GHMP kinase family. Homoserine kinase subfamily.

The protein localises to the cytoplasm. It carries out the reaction L-homoserine + ATP = O-phospho-L-homoserine + ADP + H(+). Its pathway is amino-acid biosynthesis; L-threonine biosynthesis; L-threonine from L-aspartate: step 4/5. Its function is as follows. Catalyzes the ATP-dependent phosphorylation of L-homoserine to L-homoserine phosphate. This is Homoserine kinase from Bacillus thuringiensis subsp. konkukian (strain 97-27).